Here is a 439-residue protein sequence, read N- to C-terminus: Nitroalkane oxidase (439 aa).

Residues 131–134, 139–141, 169–171, R304, 313–314, 375–379, and 400–404 contribute to the FAD site; these read LMHS, TAN, WPS, HQ, KAVGM, and LFDGG. Residue D402 is the Proton acceptor of the active site.

The protein belongs to the acyl-CoA dehydrogenase family. As to quaternary structure, homotetramer. FAD serves as cofactor.

The catalysed reaction is a primary nitroalkane + O2 + H2O = an aldehyde + nitrite + H2O2 + H(+). It catalyses the reaction a secondary nitroalkane + O2 + H2O = a ketone + nitrite + H2O2 + H(+). Strongly inhibited by mercury chloride and KCN. Its function is as follows. Catalyzes the oxidative denitrification of neutral nitroalkanes, including 3-nitro-2-pentanol, 1-nitropropane, 2-nitropropane, nitroethane and nitrocyclohexane, and may thereby protect the organism against toxic compounds. Has no detectable acyl-CoA dehydrogenase activity. In Fusarium oxysporum (Fusarium vascular wilt), this protein is Nitroalkane oxidase.